We begin with the raw amino-acid sequence, 765 residues long: MKNFLPRTLKNIYELYFNNISVHSIVSRNTQLKRSKIIQMTTETFEDIKLEDIPVDDIDFSDLEEQYKVTEEFNFDQYIVVNGAPVIPSAKVPVLKKALTSLFSKAGKVVNMEFPIDEATGKTKGFLFVECGSMNDAKKIIKSFHGKRLDLKHRLFLYTMKDVERYNSDDFDTEFREPDMPTFVPSSSLKSWLMDDKVRDQFVLQDDVKTSVFWNSMFNEEDSLVESRENWSTNYVRFSPKGTYLFSYHQQGVTAWGGPNFDRLRRFYHPDVRNSSVSPNEKYLVTFSTEPIIVEEDNEFSPFTKKNEGHQLCIWDIASGLLMATFPVIKSPYLKWPLVRWSYNDKYCARMVGDSLIVHDATKNFMPLEAKALKPSGIRDFSFAPEGVKLQPFRNGDEPSVLLAYWTPETNNSACTATIAEVPRGRVLKTVNLVQVSNVTLHWQNQAEFLCFNVERHTKSGKTQFSNLQICRLTERDIPVEKVELKDSVFEFGWEPHGNRFVTISVHEVADMNYAIPANTIRFYAPETKEKTAKDVIKRWSLVKEIPKTFANTVSWSPAGRFVVVGALVGPNMRRSDLQFYDMDYPGEKNINDNNDVSASLKDVAHPTYSAATNITWDPSGRYVTAWSSSLKHKVEHGYKIFNIAGNLVKEDIIAGFKNFAWRPRPASILSNAERKKVRKNLREWSAQFEEQDAMEADTAMRDLILHQRELLKQWTEYREKIGQEMEKSMNFKIFDVQPEDASDDFTTIEEIVEEVLEETKEKVE.

The interval 1 to 136 is sufficient for interaction with HCR1 and TIF32; sequence MKNFLPRTLK…LFVECGSMND (136 aa). The interval 28–261 is sufficient for interaction with PIC8; that stretch reads RNTQLKRSKI…GVTAWGGPNF (234 aa). S61 carries the post-translational modification Phosphoserine. Y67 carries the post-translational modification Phosphotyrosine. The RRM domain maps to 77 to 162; the sequence is QYIVVNGAPV…HRLFLYTMKD (86 aa). S671 bears the Phosphoserine mark.

It belongs to the eIF-3 subunit B family. Component of the eukaryotic translation initiation factor 3 (eIF-3) complex.

The protein resides in the cytoplasm. RNA-binding component of the eukaryotic translation initiation factor 3 (eIF-3) complex, which is involved in protein synthesis of a specialized repertoire of mRNAs and, together with other initiation factors, stimulates binding of mRNA and methionyl-tRNAi to the 40S ribosome. The eIF-3 complex specifically targets and initiates translation of a subset of mRNAs involved in cell proliferation. In Saccharomyces cerevisiae (strain YJM789) (Baker's yeast), this protein is Eukaryotic translation initiation factor 3 subunit B.